A 316-amino-acid polypeptide reads, in one-letter code: tRNA dimethylallyltransferase (316 aa).

15–22 serves as a coordination point for ATP; the sequence is GPTASGKS. Residue 17 to 22 coordinates substrate; the sequence is TASGKS. Positions 40-43 are interaction with substrate tRNA; it reads DSRQ.

This sequence belongs to the IPP transferase family. As to quaternary structure, monomer. The cofactor is Mg(2+).

It catalyses the reaction adenosine(37) in tRNA + dimethylallyl diphosphate = N(6)-dimethylallyladenosine(37) in tRNA + diphosphate. In terms of biological role, catalyzes the transfer of a dimethylallyl group onto the adenine at position 37 in tRNAs that read codons beginning with uridine, leading to the formation of N6-(dimethylallyl)adenosine (i(6)A). This Chlorobium limicola (strain DSM 245 / NBRC 103803 / 6330) protein is tRNA dimethylallyltransferase.